The chain runs to 264 residues: NAD kinase (264 aa).

The active-site Proton acceptor is D45. Residues 45–46 (DG), H50, 121–122 (NE), R147, D149, A184, and Q224 contribute to the NAD(+) site.

The protein belongs to the NAD kinase family. It depends on a divalent metal cation as a cofactor.

Its subcellular location is the cytoplasm. The catalysed reaction is NAD(+) + ATP = ADP + NADP(+) + H(+). Involved in the regulation of the intracellular balance of NAD and NADP, and is a key enzyme in the biosynthesis of NADP. Catalyzes specifically the phosphorylation on 2'-hydroxyl of the adenosine moiety of NAD to yield NADP. The chain is NAD kinase from Lysinibacillus sphaericus (strain C3-41).